The primary structure comprises 78 residues: MKNIKNSPKLQLKSTGTPFQGTVDYKNIALLRKYISTEGKILPRRITGLTAKQQRAVAKAIKNARMVGLLPFINLEGY.

It belongs to the bacterial ribosomal protein bS18 family. Part of the 30S ribosomal subunit.

The protein localises to the plastid. It is found in the chloroplast. In Oltmannsiellopsis viridis (Marine flagellate), this protein is Small ribosomal subunit protein bS18c.